A 237-amino-acid chain; its full sequence is Large ribosomal subunit protein bL25 (237 aa).

Residues M1–S104 form an N-terminal domain region. The segment at Q105–Q189 is middle domain. A C-terminal domain region spans residues V190–Q237. A disordered region spans residues E205–Q237.

The protein belongs to the bacterial ribosomal protein bL25 family. CTC subfamily. As to quaternary structure, part of the 50S ribosomal subunit. Contacts proteins L11 and L16, the A site tRNA, and the 5S and 23S rRNAs.

Its function is as follows. This is one of 3 proteins that mediate the attachment of the 5S rRNA onto the large ribosomal subunit. This protein has three domains. The N-terminal one is bound on the solvent face, the middle domain fills the space between the 5S rRNA and the L11 arm contacting the 23S rRNA while the C-terminal domain is on the edge of the intersubunit interface and contacts the A site. The protein conformation changes upon binding of a tRNA mimic to the A site, although the mimic does not interact directly with CTC itself, consistent with CTCs presumed role in moderating A site binding. In Deinococcus radiodurans (strain ATCC 13939 / DSM 20539 / JCM 16871 / CCUG 27074 / LMG 4051 / NBRC 15346 / NCIMB 9279 / VKM B-1422 / R1), this protein is Large ribosomal subunit protein bL25 (rplY).